Here is a 149-residue protein sequence, read N- to C-terminus: Transcriptional regulator MraZ (149 aa).

2 consecutive SpoVT-AbrB domains span residues 9–52 (AYSY…PRAQ) and 82–125 (AQEV…DRAR).

The protein belongs to the MraZ family. Forms oligomers.

Its subcellular location is the cytoplasm. The protein resides in the nucleoid. In Treponema pallidum subsp. pallidum (strain SS14), this protein is Transcriptional regulator MraZ.